An 82-amino-acid chain; its full sequence is Acyl carrier protein (82 aa).

Residues 4 to 79 enclose the Carrier domain; that stretch reads EKIFQELKNI…DVVDIIESNL (76 aa). Ser39 carries the post-translational modification O-(pantetheine 4'-phosphoryl)serine.

Belongs to the acyl carrier protein (ACP) family. In terms of processing, 4'-phosphopantetheine is transferred from CoA to a specific serine of apo-ACP by AcpS. This modification is essential for activity because fatty acids are bound in thioester linkage to the sulfhydryl of the prosthetic group.

Its subcellular location is the cytoplasm. It participates in lipid metabolism; fatty acid biosynthesis. Carrier of the growing fatty acid chain in fatty acid biosynthesis. The sequence is that of Acyl carrier protein from Coprothermobacter proteolyticus (strain ATCC 35245 / DSM 5265 / OCM 4 / BT).